A 375-amino-acid chain; its full sequence is Alcohol dehydrogenase 1B (375 aa).

Position 1 is an N-acetylserine (Ser1). Cys46, His67, Cys97, Cys100, Cys103, Cys111, and Cys174 together coordinate Zn(2+). NAD(+) is bound by residues 199 to 204 (GLGGVG), Asp223, Lys228, 293 to 295 (VGV), and Arg370.

The protein belongs to the zinc-containing alcohol dehydrogenase family. Class-I subfamily. As to quaternary structure, multimeric (with different ratios of monomers). It depends on Zn(2+) as a cofactor.

The protein localises to the cytoplasm. The enzyme catalyses a primary alcohol + NAD(+) = an aldehyde + NADH + H(+). It carries out the reaction a secondary alcohol + NAD(+) = a ketone + NADH + H(+). The chain is Alcohol dehydrogenase 1B from Saara hardwickii (Indian spiny-tailed lizard).